A 165-amino-acid chain; its full sequence is UPF0178 protein Bphyt_5655 (165 aa).

Disordered stretches follow at residues 115 to 134 (LRGS…RDSK) and 139 to 165 (ELDR…PPTE).

It belongs to the UPF0178 family.

In Paraburkholderia phytofirmans (strain DSM 17436 / LMG 22146 / PsJN) (Burkholderia phytofirmans), this protein is UPF0178 protein Bphyt_5655.